We begin with the raw amino-acid sequence, 60 residues long: Metallothionein (60 aa).

The beta stretch occupies residues 1–28 (MDPCECSKTGNCTCGGSCTCKNCSCTSC). 20 residues coordinate a divalent metal cation: cysteine 4, cysteine 6, cysteine 12, cysteine 14, cysteine 18, cysteine 20, cysteine 23, cysteine 25, cysteine 28, cysteine 32, cysteine 33, cysteine 35, cysteine 36, cysteine 40, cysteine 43, cysteine 47, cysteine 49, cysteine 54, cysteine 58, and cysteine 59. An alpha region spans residues 29-60 (KKSCCSCCPSGCSKCASGCVCKGKTCDTSCCQ).

Belongs to the metallothionein superfamily. Type 1 family.

Functionally, metallothioneins have a high content of cysteine residues that bind various heavy metals. The polypeptide is Metallothionein (mt) (Gobiomorphus cotidianus (New Zealand common bully)).